The sequence spans 258 residues: UPF0246 protein NTHI1156 (258 aa).

The protein belongs to the UPF0246 family.

This chain is UPF0246 protein NTHI1156, found in Haemophilus influenzae (strain 86-028NP).